The chain runs to 275 residues: Bis(5'-nucleosyl)-tetraphosphatase, symmetrical (275 aa).

Belongs to the Ap4A hydrolase family.

The enzyme catalyses P(1),P(4)-bis(5'-adenosyl) tetraphosphate + H2O = 2 ADP + 2 H(+). Functionally, hydrolyzes diadenosine 5',5'''-P1,P4-tetraphosphate to yield ADP. This Pasteurella multocida (strain Pm70) protein is Bis(5'-nucleosyl)-tetraphosphatase, symmetrical (apaH).